We begin with the raw amino-acid sequence, 642 residues long: Dihydrolipoyllysine-residue acetyltransferase component of pyruvate dehydrogenase complex, mitochondrial (642 aa).

The N-terminal 85 residues, methionine 1–tyrosine 85, are a transit peptide targeting the mitochondrion. The disordered stretch occupies residues proline 80–serine 99. Lipoyl-binding domains lie at histidine 90–valine 166 and histidine 217–valine 293. A Phosphoserine modification is found at serine 99. 2 positions are modified to N6-lipoyllysine: lysine 131 and lysine 258. Residues leucine 313–proline 346 are disordered. The span at alanine 317–proline 337 shows a compositional bias: pro residues. In terms of domain architecture, Peripheral subunit-binding (PSBD) spans phenylalanine 351–valine 388. Residue arginine 456 participates in CoA binding. N6-acetyllysine is present on lysine 461. Lysine 468 is subject to N6-succinyllysine. Serine 470 provides a ligand contact to CoA. Lysine 542 carries the post-translational modification N6-succinyllysine. CoA is bound by residues serine 561, asparagine 562, and glycine 586. Catalysis depends on residues histidine 615 and aspartate 619.

The protein belongs to the 2-oxoacid dehydrogenase family. As to quaternary structure, part of the pyruvate dehydrogenase complex (PDHc) that is a multi-enzyme complex composed of multiple copies of three enzymes, pyruvate dehydrogenase (subunits PDH1A and PDHB, E1 component), dihydrolipoamide acetyltransferase (DLAT, E2 component), and dihydrolipoamide dehydrogenase (DLD, E3 component) to which is added an additional protein the E3-binding protein (PDHX, E3BP). In terms of structural architecture, the E2 and E3BP components assemble into a 60meric central core with icosahedral symmetry. The central core is decorated with E1 and E3 proteins. Currently, two alternative models for the E2:E3BP stoichiometry are considered as being either 48:12 (E2(48)-E3BP(12)) or 40:20 (E2(40)-E3BP(20)). Interacts with PDK2 and PDK3. Interacts with SIRT4. Interacts with PDHB. The cofactor is (R)-lipoate. Post-translationally, delipoylated at Lys-131 and Lys-258 by SIRT4, delipoylation decreases the PHD complex activity.

It localises to the mitochondrion matrix. The catalysed reaction is N(6)-[(R)-dihydrolipoyl]-L-lysyl-[protein] + acetyl-CoA = N(6)-[(R)-S(8)-acetyldihydrolipoyl]-L-lysyl-[protein] + CoA. Its function is as follows. As part of the pyruvate dehydrogenase complex, catalyzes the transfers of an acetyl group to a lipoic acid moiety. The pyruvate dehydrogenase complex, catalyzes the overall conversion of pyruvate to acetyl-CoA and CO(2), and thereby links cytoplasmic glycolysis and the mitochondrial tricarboxylic acid (TCA) cycle. This is Dihydrolipoyllysine-residue acetyltransferase component of pyruvate dehydrogenase complex, mitochondrial from Mus musculus (Mouse).